The primary structure comprises 318 residues: Aspartate carbamoyltransferase catalytic subunit (318 aa).

Positions 66 and 67 each coordinate carbamoyl phosphate. Residue lysine 94 coordinates L-aspartate. The carbamoyl phosphate site is built by arginine 116, histidine 144, and glutamine 147. 2 residues coordinate L-aspartate: arginine 177 and arginine 231. The carbamoyl phosphate site is built by glycine 272 and proline 273.

This sequence belongs to the aspartate/ornithine carbamoyltransferase superfamily. ATCase family. Heterododecamer (2C3:3R2) of six catalytic PyrB chains organized as two trimers (C3), and six regulatory PyrI chains organized as three dimers (R2).

The enzyme catalyses carbamoyl phosphate + L-aspartate = N-carbamoyl-L-aspartate + phosphate + H(+). It functions in the pathway pyrimidine metabolism; UMP biosynthesis via de novo pathway; (S)-dihydroorotate from bicarbonate: step 2/3. In terms of biological role, catalyzes the condensation of carbamoyl phosphate and aspartate to form carbamoyl aspartate and inorganic phosphate, the committed step in the de novo pyrimidine nucleotide biosynthesis pathway. The polypeptide is Aspartate carbamoyltransferase catalytic subunit (Frankia casuarinae (strain DSM 45818 / CECT 9043 / HFP020203 / CcI3)).